The sequence spans 123 residues: MEPCELQNELVSAEGRNRKAVLCQRCGSRVLQPGTALFSRRQLFLPSMRKKPDLADGSNPDGDLLQEHWLVNDMFTFENVGFTKDVGNIKFLVCADCEIGPIGWHCLDDKNSFYVALERVSHE.

M1 carries the N-acetylmethionine modification. Residues 9 to 123 (ELVSAEGRNR…YVALERVSHE (115 aa)) enclose the MSS4 domain. Zn(2+)-binding residues include C23, C26, C94, and C97.

The protein belongs to the DSS4/MSS4 family. Interacts with RAB8A.

Its function is as follows. Guanine-nucleotide-releasing protein that acts on members of the SEC4/YPT1/RAB subfamily. Stimulates GDP release from both YPT1, RAB3A and RAB10, but is less active on these proteins than on the SEC4 protein. Might play a general role in vesicular transport. This chain is Guanine nucleotide exchange factor MSS4, found in Mus musculus (Mouse).